We begin with the raw amino-acid sequence, 174 residues long: N5-carboxyaminoimidazole ribonucleotide mutase (174 aa).

The substrate site is built by Ser-15, Asp-18, and Arg-45.

It belongs to the AIR carboxylase family. Class I subfamily.

The enzyme catalyses 5-carboxyamino-1-(5-phospho-D-ribosyl)imidazole + H(+) = 5-amino-1-(5-phospho-D-ribosyl)imidazole-4-carboxylate. It functions in the pathway purine metabolism; IMP biosynthesis via de novo pathway; 5-amino-1-(5-phospho-D-ribosyl)imidazole-4-carboxylate from 5-amino-1-(5-phospho-D-ribosyl)imidazole (N5-CAIR route): step 2/2. Catalyzes the conversion of N5-carboxyaminoimidazole ribonucleotide (N5-CAIR) to 4-carboxy-5-aminoimidazole ribonucleotide (CAIR). This is N5-carboxyaminoimidazole ribonucleotide mutase from Pyrococcus abyssi (strain GE5 / Orsay).